A 206-amino-acid chain; its full sequence is Ribosomal RNA large subunit methyltransferase E (206 aa).

S-adenosyl-L-methionine-binding residues include Gly-61, Trp-63, Asp-81, Asp-97, and Asp-122. Lys-162 functions as the Proton acceptor in the catalytic mechanism.

It belongs to the class I-like SAM-binding methyltransferase superfamily. RNA methyltransferase RlmE family.

It localises to the cytoplasm. It catalyses the reaction uridine(2552) in 23S rRNA + S-adenosyl-L-methionine = 2'-O-methyluridine(2552) in 23S rRNA + S-adenosyl-L-homocysteine + H(+). Functionally, specifically methylates the uridine in position 2552 of 23S rRNA at the 2'-O position of the ribose in the fully assembled 50S ribosomal subunit. This chain is Ribosomal RNA large subunit methyltransferase E, found in Neisseria meningitidis serogroup C (strain 053442).